Consider the following 98-residue polypeptide: PqqA binding protein (98 aa).

This sequence belongs to the PqqD family. In terms of assembly, monomer. Interacts with PqqE.

Its pathway is cofactor biosynthesis; pyrroloquinoline quinone biosynthesis. Its function is as follows. Functions as a PqqA binding protein and presents PqqA to PqqE, in the pyrroloquinoline quinone (PQQ) biosynthetic pathway. The sequence is that of PqqA binding protein from Rhizobium meliloti (strain 1021) (Ensifer meliloti).